The following is a 433-amino-acid chain: Xylose isomerase (433 aa).

Residues D305 and D307 each contribute to the Mg(2+) site.

This sequence belongs to the xylose isomerase family. As to quaternary structure, homotetramer. It depends on Mg(2+) as a cofactor.

It is found in the cytoplasm. The enzyme catalyses alpha-D-xylose = alpha-D-xylulofuranose. The chain is Xylose isomerase from Cereibacter sphaeroides (strain KD131 / KCTC 12085) (Rhodobacter sphaeroides).